A 584-amino-acid polypeptide reads, in one-letter code: ATP-dependent RNA helicase MRH4, mitochondrial (584 aa).

A mitochondrion-targeting transit peptide spans 1–49 (MQPVFSRFPYASKSGFISLASRGYAVSRNSGSSIKSNLRSKPRADTRWN). The segment covering 28–39 (RNSGSSIKSNLR) has biased composition (polar residues). A disordered region spans residues 28–92 (RNSGSSIKSN…QTQQQFQYGE (65 aa)). Residues 63–79 (GKGDHRSHSRSDSRAKP) show a composition bias toward basic and acidic residues. The short motif at 162–169 (HLKPSPIQ) is the Q motif element. The 188-residue stretch at 179-366 (TLMDPQLQVR…TRLFPTVGVI (188 aa)) folds into the Helicase ATP-binding domain. An ATP-binding site is contributed by 192 to 199 (AETGSGKT). The DEAD box signature appears at 314 to 317 (DEAD). The Helicase C-terminal domain occupies 397–584 (ALAQILYSIN…SIVSKNVSIS (188 aa)).

It belongs to the DEAD box helicase family. MRH4 subfamily.

Its subcellular location is the mitochondrion. The catalysed reaction is ATP + H2O = ADP + phosphate + H(+). ATP-binding RNA helicase involved in mitochondrial RNA metabolism. Required for maintenance of mitochondrial DNA. In Kluyveromyces lactis (strain ATCC 8585 / CBS 2359 / DSM 70799 / NBRC 1267 / NRRL Y-1140 / WM37) (Yeast), this protein is ATP-dependent RNA helicase MRH4, mitochondrial (MRH4).